Consider the following 76-residue polypeptide: Short coiled-coil protein B (76 aa).

Positions 6 to 52 (ENQVELEEKTRLINQVLELQNTLEDLSARVDAVKEENLKLKSENQVL) form a coiled coil.

Belongs to the SCOC family.

The protein resides in the golgi apparatus membrane. The protein localises to the golgi apparatus. It localises to the trans-Golgi network. It is found in the cytoplasm. Its subcellular location is the cytosol. In terms of biological role, positive regulator of amino acid starvation-induced autophagy. In Danio rerio (Zebrafish), this protein is Short coiled-coil protein B (scocb).